The sequence spans 621 residues: MMRARFPLLLLGVVFLASVSVSFGIAYWEKQNPSHNKCLRSCNSEKDSYRNQACHARCNLLKVEEEEECEEGQIPRPRPQHPERERQQHGEKEEDEGEQPRPFPFPRPRQPHQEEEHEQKEEHEWHRKEEKHGGKGSEEEQDEREHPRPHQPHQKEEEKHEWQHKQEKHQGKESEEEEEDQDEDEEQDKESQESEGSESQREPRRHKNKNPFHFNSKRFQTLFKNQYGHVRVLQRFNKRSQQLQNLRDYRILEFNSKPNTLLLPHHADADYLIVILNGTAILTLVNNDDRDSYNLQSGDALRVPAGTTYYVVNPDNDENLRMITLAIPVNKPGRFESFFLSSTQAQQSYLQGFSKNILEASYDTKFEEINKVLFGREEGQQQGEERLQESVIVEISKKQIRELSKHAKSSSRKTISSEDKPFNLRSRDPIYSNKLGKLFEITPEKNPQLRDLDVFLSVVDMNEGALFLPHFNSKAIVVLVINEGEANIELVGIKEQQQRQQQEEQPLEVRKYRAELSEQDIFVIPAGYPVVVNATSDLNFFAFGINAENNQRNFLAGSKDNVISQIPSQVQELAFPGSAKDIENLIKSQSESYFVDAQPQQKEEGNKGRKGPLSSILRAFY.

The first 24 residues, 1-24, serve as a signal peptide directing secretion; that stretch reads MMRARFPLLLLGVVFLASVSVSFG. A propeptide spanning residues 25-62 is cleaved from the precursor; that stretch reads IAYWEKQNPSHNKCLRSCNSEKDSYRNQACHARCNLLK. Residues 64–214 are disordered; that stretch reads EEEEECEEGQ…RHKNKNPFHF (151 aa). Composition is skewed to basic and acidic residues over residues 80–92 and 111–173; these read QHPERERQQHGEK and PHQE…QGKE. A compositionally biased stretch (acidic residues) spans 174–196; sequence SEEEEEDQDEDEEQDKESQESEG. 2 consecutive Cupin type-1 domains span residues 212-370 and 422-583; these read FHFN…EEIN and FNLR…KDIE. N-linked (GlcNAc...) asparagine glycosylation is found at asparagine 277 and asparagine 533. A necessary for sorting to protein storage vacuole region spans residues 612-621; the sequence is PLSSILRAFY.

This sequence belongs to the 7S seed storage protein family. As to quaternary structure, the alpha-, alpha'-, and beta-subunits associate in various combinations to form trimeric proteins.

Its subcellular location is the vacuole. The protein localises to the aleurone grain. It is found in the endoplasmic reticulum. The protein resides in the protein storage vacuole. Functionally, seed storage protein. Accumulates during seed development and is hydrolyzed after germination to provide a carbon and nitrogen source for the developing seedling. The protein is Beta-conglycinin alpha' subunit of Glycine max (Soybean).